Here is an 85-residue protein sequence, read N- to C-terminus: Large ribosomal subunit protein bL27 (85 aa).

Residues methionine 1–leucine 21 form a disordered region.

The protein belongs to the bacterial ribosomal protein bL27 family.

This chain is Large ribosomal subunit protein bL27, found in Ectopseudomonas mendocina (strain ymp) (Pseudomonas mendocina).